The chain runs to 471 residues: Amidophosphoribosyltransferase (471 aa).

The Nucleophile role is filled by Cys-2. Positions 2–224 constitute a Glutamine amidotransferase type-2 domain; that stretch reads CGIFGIYSYE…PGEIIEIKDG (223 aa). Residue Cys-255 coordinates [4Fe-4S] cluster. Residues Ser-302, Asp-364, and Asp-365 each contribute to the Mg(2+) site. [4Fe-4S] cluster is bound by residues Cys-401, Cys-450, and Cys-453.

The protein in the C-terminal section; belongs to the purine/pyrimidine phosphoribosyltransferase family. It depends on Mg(2+) as a cofactor. [4Fe-4S] cluster serves as cofactor.

It carries out the reaction 5-phospho-beta-D-ribosylamine + L-glutamate + diphosphate = 5-phospho-alpha-D-ribose 1-diphosphate + L-glutamine + H2O. It participates in purine metabolism; IMP biosynthesis via de novo pathway; N(1)-(5-phospho-D-ribosyl)glycinamide from 5-phospho-alpha-D-ribose 1-diphosphate: step 1/2. Catalyzes the formation of phosphoribosylamine from phosphoribosylpyrophosphate (PRPP) and glutamine. This chain is Amidophosphoribosyltransferase, found in Methanocaldococcus jannaschii (strain ATCC 43067 / DSM 2661 / JAL-1 / JCM 10045 / NBRC 100440) (Methanococcus jannaschii).